Reading from the N-terminus, the 430-residue chain is Long-chain specific acyl-CoA dehydrogenase, mitochondrial (430 aa).

Residues 1–30 (MAARLLRGSLRFLGGHCAARPLPALRCSHS) constitute a mitochondrion transit peptide. Lys42 carries the N6-acetyllysine modification. Phosphoserine is present on residues Ser54 and Ser55. N6-acetyllysine; alternate is present on residues Lys66 and Lys81. Lys66 and Lys81 each carry N6-succinyllysine; alternate. N6-acetyllysine is present on residues Lys92 and Lys95. Residue Lys165 is modified to N6-succinyllysine. FAD-binding positions include 170–179 (IAMTELGAGS) and 203–205 (FIS). Ser179 provides a ligand contact to substrate. 227 to 228 (AR) lines the substrate pocket. Residue Lys240 is modified to N6-succinyllysine. An N6-acetyllysine; alternate mark is found at Lys254 and Lys279. N6-succinyllysine; alternate occurs at positions 254 and 279. Substrate contacts are provided by residues Tyr282 and 289-292 (PQER). The active-site Proton acceptor is the Glu291. Arg317 contacts FAD. At Lys318 the chain carries N6-acetyllysine. Lys322 is subject to N6-acetyllysine; alternate. Residue Lys322 is modified to N6-succinyllysine; alternate. FAD is bound at residue Gln328. Position 358 is an N6-acetyllysine (Lys358). Phosphoserine is present on Ser362. An FAD-binding site is contributed by 385–389 (QLHGG). 412–413 (GG) contributes to the substrate binding site. 414–416 (TNE) provides a ligand contact to FAD.

It belongs to the acyl-CoA dehydrogenase family. As to quaternary structure, homotetramer. Requires FAD as cofactor. Post-translationally, acetylation at Lys-318 and Lys-322 in proximity of the cofactor-binding sites strongly reduces catalytic activity. These sites are deacetylated by SIRT3.

The protein localises to the mitochondrion matrix. The catalysed reaction is a long-chain 2,3-saturated fatty acyl-CoA + oxidized [electron-transfer flavoprotein] + H(+) = a long-chain (2E)-enoyl-CoA + reduced [electron-transfer flavoprotein]. It catalyses the reaction hexanoyl-CoA + oxidized [electron-transfer flavoprotein] + H(+) = (2E)-hexenoyl-CoA + reduced [electron-transfer flavoprotein]. It carries out the reaction octanoyl-CoA + oxidized [electron-transfer flavoprotein] + H(+) = (2E)-octenoyl-CoA + reduced [electron-transfer flavoprotein]. The enzyme catalyses decanoyl-CoA + oxidized [electron-transfer flavoprotein] + H(+) = (2E)-decenoyl-CoA + reduced [electron-transfer flavoprotein]. The catalysed reaction is dodecanoyl-CoA + oxidized [electron-transfer flavoprotein] + H(+) = (2E)-dodecenoyl-CoA + reduced [electron-transfer flavoprotein]. It catalyses the reaction tetradecanoyl-CoA + oxidized [electron-transfer flavoprotein] + H(+) = (2E)-tetradecenoyl-CoA + reduced [electron-transfer flavoprotein]. It carries out the reaction oxidized [electron-transfer flavoprotein] + hexadecanoyl-CoA + H(+) = (2E)-hexadecenoyl-CoA + reduced [electron-transfer flavoprotein]. The enzyme catalyses octadecanoyl-CoA + oxidized [electron-transfer flavoprotein] + H(+) = (2E)-octadecenoyl-CoA + reduced [electron-transfer flavoprotein]. The catalysed reaction is eicosanoyl-CoA + oxidized [electron-transfer flavoprotein] + H(+) = (2E)-eicosenoyl-CoA + reduced [electron-transfer flavoprotein]. It catalyses the reaction docosanoyl-CoA + oxidized [electron-transfer flavoprotein] + H(+) = (2E)-docosenoyl-CoA + reduced [electron-transfer flavoprotein]. It carries out the reaction tetracosanoyl-CoA + oxidized [electron-transfer flavoprotein] + H(+) = (2E)-tetracosenoyl-CoA + reduced [electron-transfer flavoprotein]. The enzyme catalyses (5E)-tetradecenoyl-CoA + oxidized [electron-transfer flavoprotein] + H(+) = (2E,5E)-tetradecadienoyl-CoA + reduced [electron-transfer flavoprotein]. The catalysed reaction is (5Z)-tetradecenoyl-CoA + oxidized [electron-transfer flavoprotein] + H(+) = (2E,5Z)-tetradecadienoyl-CoA + reduced [electron-transfer flavoprotein]. It catalyses the reaction oxidized [electron-transfer flavoprotein] + (9Z)-octadecenoyl-CoA + H(+) = (2E,9Z)-octadecadienoyl-CoA + reduced [electron-transfer flavoprotein]. It participates in lipid metabolism; mitochondrial fatty acid beta-oxidation. In terms of biological role, long-chain specific acyl-CoA dehydrogenase is one of the acyl-CoA dehydrogenases that catalyze the first step of mitochondrial fatty acid beta-oxidation, an aerobic process breaking down fatty acids into acetyl-CoA and allowing the production of energy from fats. The first step of fatty acid beta-oxidation consists in the removal of one hydrogen from C-2 and C-3 of the straight-chain fatty acyl-CoA thioester, resulting in the formation of trans-2-enoyl-CoA. Among the different mitochondrial acyl-CoA dehydrogenases, long-chain specific acyl-CoA dehydrogenase can act on saturated and unsaturated acyl-CoAs with 6 to 24 carbons with a preference for 8 to 18 carbons long primary chains. In Macaca fascicularis (Crab-eating macaque), this protein is Long-chain specific acyl-CoA dehydrogenase, mitochondrial.